We begin with the raw amino-acid sequence, 149 residues long: Oligosaccharyltransferase complex subunit OSTC (149 aa).

Residues 1–32 (METLYRVPFLVLECPNLKLKKPPWVHMPSAMT) are Cytoplasmic-facing. A helical transmembrane segment spans residues 33–53 (VYALVVVSYFLITGGIIYDVI). The Extracellular segment spans residues 54–83 (VEPPSVGSMTDEHGHQRPVAFLAYRVNGQY). A helical membrane pass occupies residues 84–104 (IMEGLASSFLFTMGGLGFIIL). Residues 105–117 (DRSNAPNIPKLNR) are Cytoplasmic-facing. The helical transmembrane segment at 118 to 138 (FLLLFIGFVCVLLSFFMARVF) threads the bilayer. Topologically, residues 139–149 (MRMKLPGYLMG) are extracellular.

Belongs to the OSTC family. As to quaternary structure, component of STT3A-containing oligosaccharyl transferase (OST-A) complex. STT3A-containing complex assembly occurs through the formation of 3 subcomplexes. Subcomplex 1 contains RPN1 and TMEM258, subcomplex 2 contains the STT3A-specific subunits STT3A, DC2/OSTC, and KCP2 as well as the core subunit OST4, and subcomplex 3 contains RPN2, DAD1, and OST48. The OST-A complex can form stable complexes with the Sec61 complex or with both the Sec61 and TRAP complexes. Interacts with PSEN1 and NCSTN; indicative for an association with the gamma-secretase complex.

Its subcellular location is the endoplasmic reticulum. It is found in the membrane. The protein operates within protein modification; protein glycosylation. In terms of biological role, subunit of STT3A-containing oligosaccharyl transferase (OST-A) complex that catalyzes the initial transfer of a defined glycan (Glc(3)Man(9)GlcNAc(2) in eukaryotes) from the lipid carrier dolichol-pyrophosphate to an asparagine residue within an Asn-X-Ser/Thr consensus motif in nascent polypeptide chains, the first step in protein N-glycosylation. N-glycosylation occurs cotranslationally and the complex associates with the Sec61 complex at the channel-forming translocon complex that mediates protein translocation across the endoplasmic reticulum (ER). Within the OST-A complex, acts as an adapter that anchors the OST-A complex to the Sec61 complex. May be involved in N-glycosylation of APP (amyloid-beta precursor protein). Can modulate gamma-secretase cleavage of APP by enhancing endoprotelysis of PSEN1. The chain is Oligosaccharyltransferase complex subunit OSTC from Canis lupus familiaris (Dog).